Consider the following 99-residue polypeptide: Large ribosomal subunit protein uL23 (99 aa).

The protein belongs to the universal ribosomal protein uL23 family. As to quaternary structure, part of the 50S ribosomal subunit. Contacts protein L29, and trigger factor when it is bound to the ribosome.

One of the early assembly proteins it binds 23S rRNA. One of the proteins that surrounds the polypeptide exit tunnel on the outside of the ribosome. Forms the main docking site for trigger factor binding to the ribosome. This Leifsonia xyli subsp. xyli (strain CTCB07) protein is Large ribosomal subunit protein uL23.